The primary structure comprises 147 residues: Small ribosomal subunit protein uS12 (147 aa).

This sequence belongs to the universal ribosomal protein uS12 family. In terms of assembly, part of the 30S ribosomal subunit.

Its function is as follows. With S4 and S5 plays an important role in translational accuracy. Located at the interface of the 30S and 50S subunits. This is Small ribosomal subunit protein uS12 from Sulfolobus acidocaldarius (strain ATCC 33909 / DSM 639 / JCM 8929 / NBRC 15157 / NCIMB 11770).